Here is a 496-residue protein sequence, read N- to C-terminus: NADP-dependent glyceraldehyde-3-phosphate dehydrogenase (496 aa).

Substrate-binding positions include R116 and 169-170 (NY). NADP(+)-binding residues include K192, T195, and D230. 245-249 (GGDTG) provides a ligand contact to NAD(+). The Proton acceptor role is filled by E264. Substrate is bound at residue 297 to 299 (RCT). The Nucleophile role is filled by C298. Residue E391 participates in NADP(+) binding. Position 451 (R451) interacts with substrate.

The protein belongs to the aldehyde dehydrogenase family.

It localises to the cytoplasm. Its subcellular location is the cytosol. The enzyme catalyses D-glyceraldehyde 3-phosphate + NADP(+) + H2O = (2R)-3-phosphoglycerate + NADPH + 2 H(+). With respect to regulation, competitive inhibition by NADPH, 3-phospho-D-glycerate and ATP. Important as a means of generating NADPH for biosynthetic reactions. May be a main source of cytosolic NADPH for mannitol biosynthesis in leaves. The chain is NADP-dependent glyceraldehyde-3-phosphate dehydrogenase from Apium graveolens (Celery).